Consider the following 461-residue polypeptide: MDYFPIFCQLRTKPCLLVGGGEVAERKARLLMEAGAILTVNAGRFTPQFEQWQRDGQLTLIAGDFDPALLTGKWLAIAATDDSRVNQQVLAQSEARCIFCNVVDAAQQTGFIMPSIVDRSPLMVAVSSGGSAPVLARILREKLEALLPQHLGQVAHMAGHLRQRVKAHFPTLSLRRRFWERLFAQDRLAQSLANGDTTQAQQQVDALFSAAPMDRGEVTLVGAGPGDAGLLTLKGLQQIQQADVIIYDRLVSDEVMSLVRRDATRIFVGKHAGHHCVPQEEINQTLLDHAREGKRVVRLKGGDPFIFGRGGEELEALAAAGIAFSVVPGITAASGCSAYSGIPLTHRDHAQSVRLVTGHTRQDGQLDWSCLAAAGQTLVFYMGLSQAATIQQRLLQHGMLPDTPIALVENGTTIRQRVVSGTLTQLETLATRVASPSLIIVGDVVTLRPRLNWFRCEAASA.

Residues 1 to 204 (MDYFPIFCQL…GDTTQAQQQV (204 aa)) are precorrin-2 dehydrogenase /sirohydrochlorin ferrochelatase. NAD(+)-binding positions include 22 to 23 (EV) and 43 to 44 (GR). Phosphoserine is present on Ser128. Positions 216–461 (GEVTLVGAGP…NWFRCEAASA (246 aa)) are uroporphyrinogen-III C-methyltransferase. Pro225 lines the S-adenosyl-L-methionine pocket. The active-site Proton acceptor is Asp248. Lys270 acts as the Proton donor in catalysis. S-adenosyl-L-methionine is bound by residues 301–303 (GGD), Ile306, 331–332 (TA), Met382, and Gly411.

This sequence in the N-terminal section; belongs to the precorrin-2 dehydrogenase / sirohydrochlorin ferrochelatase family. It in the C-terminal section; belongs to the precorrin methyltransferase family.

The catalysed reaction is uroporphyrinogen III + 2 S-adenosyl-L-methionine = precorrin-2 + 2 S-adenosyl-L-homocysteine + H(+). It carries out the reaction precorrin-2 + NAD(+) = sirohydrochlorin + NADH + 2 H(+). It catalyses the reaction siroheme + 2 H(+) = sirohydrochlorin + Fe(2+). It participates in cofactor biosynthesis; adenosylcobalamin biosynthesis; precorrin-2 from uroporphyrinogen III: step 1/1. The protein operates within cofactor biosynthesis; adenosylcobalamin biosynthesis; sirohydrochlorin from precorrin-2: step 1/1. It functions in the pathway porphyrin-containing compound metabolism; siroheme biosynthesis; precorrin-2 from uroporphyrinogen III: step 1/1. Its pathway is porphyrin-containing compound metabolism; siroheme biosynthesis; siroheme from sirohydrochlorin: step 1/1. It participates in porphyrin-containing compound metabolism; siroheme biosynthesis; sirohydrochlorin from precorrin-2: step 1/1. Its function is as follows. Multifunctional enzyme that catalyzes the SAM-dependent methylations of uroporphyrinogen III at position C-2 and C-7 to form precorrin-2 via precorrin-1. Then it catalyzes the NAD-dependent ring dehydrogenation of precorrin-2 to yield sirohydrochlorin. Finally, it catalyzes the ferrochelation of sirohydrochlorin to yield siroheme. The chain is Siroheme synthase from Edwardsiella ictaluri (strain 93-146).